The chain runs to 519 residues: MFKSGISAFARTARPSFAAASRRAVRPAALNLRAPALSRFASSAGVGDGKIYQVIGAVVDVKFDTDKLPPILNALETQNNGQKLVLEVSQHLGENVVRCIAMDGTEGLVRGAKASDTGAPITIPVGPATLGRIINVTGDPIDERGPIKTDKFRPIHAEAPEFVEQSTTAEILVTGIKVVDLLAPYARGGKIGLFGGAGVGKTVFIQELINNIAKAHGGYSVFTGVGERTREGNDLYHEMQETSVIQLDGDSKVALVFGQMNEPPGARARVALTGLTIAEYFRDEEGQDVLLFIDNIFRFTQAGSEVSALLGRIPSAVGYQPTLAVDMGQMQERITTTTKGSITSVQAVYVPADDLTDPAPATTFAHLDATTVLSRGISELGIYPAVDPLDSKSRMLDPRIVGQEHYETATRVQQILQEYKSLQDIIAILGMDELSEADKLTVERARKIQRFLSQPFTVAQVFTGIEGKLVDLKDTIASFKAILAGEGDDLPEGAFYMVGDFASARAKGEKILAELEGQA.

Position 195 to 202 (195 to 202 (GGAGVGKT)) interacts with ATP.

The protein belongs to the ATPase alpha/beta chains family. As to quaternary structure, F-type ATPases have 2 components, CF(1) - the catalytic core - and CF(0) - the membrane proton channel. CF(1) has five subunits: alpha(3), beta(3), gamma(1), delta(1), epsilon(1). CF(0) has three main subunits: a, b and c.

The protein resides in the mitochondrion. It localises to the mitochondrion inner membrane. It catalyses the reaction ATP + H2O + 4 H(+)(in) = ADP + phosphate + 5 H(+)(out). In terms of biological role, mitochondrial membrane ATP synthase (F(1)F(0) ATP synthase or Complex V) produces ATP from ADP in the presence of a proton gradient across the membrane which is generated by electron transport complexes of the respiratory chain. F-type ATPases consist of two structural domains, F(1) - containing the extramembraneous catalytic core, and F(0) - containing the membrane proton channel, linked together by a central stalk and a peripheral stalk. During catalysis, ATP synthesis in the catalytic domain of F(1) is coupled via a rotary mechanism of the central stalk subunits to proton translocation. Subunits alpha and beta form the catalytic core in F(1). Rotation of the central stalk against the surrounding alpha(3)beta(3) subunits leads to hydrolysis of ATP in three separate catalytic sites on the beta subunits. In Neurospora crassa (strain ATCC 24698 / 74-OR23-1A / CBS 708.71 / DSM 1257 / FGSC 987), this protein is ATP synthase subunit beta, mitochondrial (atp-2).